Here is a 579-residue protein sequence, read N- to C-terminus: Protein downstream neighbor of son homolog (579 aa).

2 disordered regions span residues 1 to 68 and 331 to 379; these read MAEL…RRNP and FSQP…DESF. Basic and acidic residues predominate over residues 339-348; the sequence is DTGKKQKKPE. Positions 365-378 are enriched in acidic residues; that stretch reads EADEASDESDEDES.

This sequence belongs to the DONSON family. Component of the replisome complex.

The protein localises to the nucleus. Functionally, replisome component that maintains genome stability by protecting stalled or damaged replication forks. After the induction of replication stress, required for the stabilization of stalled replication forks, the efficient activation of the intra-S-phase and G/2M cell-cycle checkpoints and the maintenance of genome stability. The sequence is that of Protein downstream neighbor of son homolog from Xenopus laevis (African clawed frog).